The following is a 266-amino-acid chain: Ribosomal RNA small subunit methyltransferase A (266 aa).

Residues Asn11, Leu13, Gly37, Glu57, Asp85, and Asn104 each contribute to the S-adenosyl-L-methionine site.

It belongs to the class I-like SAM-binding methyltransferase superfamily. rRNA adenine N(6)-methyltransferase family. RsmA subfamily.

The protein localises to the cytoplasm. The enzyme catalyses adenosine(1518)/adenosine(1519) in 16S rRNA + 4 S-adenosyl-L-methionine = N(6)-dimethyladenosine(1518)/N(6)-dimethyladenosine(1519) in 16S rRNA + 4 S-adenosyl-L-homocysteine + 4 H(+). Its function is as follows. Specifically dimethylates two adjacent adenosines (A1518 and A1519) in the loop of a conserved hairpin near the 3'-end of 16S rRNA in the 30S particle. May play a critical role in biogenesis of 30S subunits. This Campylobacter jejuni subsp. jejuni serotype O:2 (strain ATCC 700819 / NCTC 11168) protein is Ribosomal RNA small subunit methyltransferase A.